The sequence spans 283 residues: ATP phosphoribosyltransferase (283 aa).

It belongs to the ATP phosphoribosyltransferase family. Long subfamily. Mg(2+) serves as cofactor.

The protein localises to the cytoplasm. The enzyme catalyses 1-(5-phospho-beta-D-ribosyl)-ATP + diphosphate = 5-phospho-alpha-D-ribose 1-diphosphate + ATP. It functions in the pathway amino-acid biosynthesis; L-histidine biosynthesis; L-histidine from 5-phospho-alpha-D-ribose 1-diphosphate: step 1/9. Feedback inhibited by histidine. In terms of biological role, catalyzes the condensation of ATP and 5-phosphoribose 1-diphosphate to form N'-(5'-phosphoribosyl)-ATP (PR-ATP). Has a crucial role in the pathway because the rate of histidine biosynthesis seems to be controlled primarily by regulation of HisG enzymatic activity. The protein is ATP phosphoribosyltransferase of Azobacteroides pseudotrichonymphae genomovar. CFP2.